We begin with the raw amino-acid sequence, 101 residues long: Protein RnfH (101 aa).

Belongs to the UPF0125 (RnfH) family.

This chain is Protein RnfH, found in Coxiella burnetii (strain RSA 331 / Henzerling II).